A 302-amino-acid polypeptide reads, in one-letter code: 4-hydroxy-tetrahydrodipicolinate synthase (302 aa).

Residue Thr-46 coordinates pyruvate. Tyr-135 functions as the Proton donor/acceptor in the catalytic mechanism. Catalysis depends on Lys-164, which acts as the Schiff-base intermediate with substrate. Val-206 is a binding site for pyruvate.

This sequence belongs to the DapA family. Homotetramer; dimer of dimers.

Its subcellular location is the cytoplasm. It catalyses the reaction L-aspartate 4-semialdehyde + pyruvate = (2S,4S)-4-hydroxy-2,3,4,5-tetrahydrodipicolinate + H2O + H(+). Its pathway is amino-acid biosynthesis; L-lysine biosynthesis via DAP pathway; (S)-tetrahydrodipicolinate from L-aspartate: step 3/4. Catalyzes the condensation of (S)-aspartate-beta-semialdehyde [(S)-ASA] and pyruvate to 4-hydroxy-tetrahydrodipicolinate (HTPA). This is 4-hydroxy-tetrahydrodipicolinate synthase from Acidobacterium capsulatum (strain ATCC 51196 / DSM 11244 / BCRC 80197 / JCM 7670 / NBRC 15755 / NCIMB 13165 / 161).